Reading from the N-terminus, the 665-residue chain is Chaperone protein dnaK1 (665 aa).

The residue at position 198 (T198) is a Phosphothreonine; by autocatalysis. The interval 634–665 (DDPWDNQMNSNSRNSRYGNSRDDDPWDNDYFL) is disordered. The segment covering 642 to 651 (NSNSRNSRYG) has biased composition (low complexity).

This sequence belongs to the heat shock protein 70 family.

Its function is as follows. Acts as a chaperone. The chain is Chaperone protein dnaK1 (dnaK1) from Prochlorococcus marinus subsp. pastoris (strain CCMP1986 / NIES-2087 / MED4).